A 207-amino-acid chain; its full sequence is Coiled-coil domain-containing protein 25 (207 aa).

The Extracellular portion of the chain corresponds to 1–104 (MVFYFTSAVV…SNLKKTADMD (104 aa)). Positions 20-24 (KDKYE) are DNA-binding. The helical transmembrane segment at 105–121 (IGQIGFHRQKEVKIVAV) threads the bilayer. Residues 112–189 (RQKEVKIVAV…EDLKNYTSLM (78 aa)) are a coiled coil. The Cytoplasmic segment spans residues 122–207 (EKKINEIVNR…EDGYDSDDFM (86 aa)). The span at 140–183 (YPDLAAEKESRDREERNEKKAQIQEQKKKEKEEVKKKKEMEDLK) shows a compositional bias: basic and acidic residues. Positions 140 to 207 (YPDLAAEKES…EDGYDSDDFM (68 aa)) are disordered. Polar residues predominate over residues 184–198 (NYTSLMKSDNMTTNE). Ser203 carries the phosphoserine modification.

The protein belongs to the CCDC25 family. In terms of assembly, interacts (via cytoplasmic region) with ILK.

Its subcellular location is the cell membrane. The protein localises to the endomembrane system. Transmembrane receptor that senses neutrophil extracellular traps (NETs) and triggers the ILK-PARVB pathway to enhance cell motility. NETs are mainly composed of DNA fibers and are released by neutrophils to bind pathogens during inflammation. Specifically binds NETs on its extracellular region, in particular the 8-OHdG-enriched DNA present in NETs, and recruits ILK, initiating the ILK-PARVB cascade to induce cytoskeleton rearrangement and directional migration of cells. The sequence is that of Coiled-coil domain-containing protein 25 from Danio rerio (Zebrafish).